The sequence spans 277 residues: Venom serine protease (277 aa).

Positions 1-19 are cleaved as a signal peptide; sequence MNCGKIILLFITIIGVAKS. Positions 34 to 269 constitute a Peptidase S1 domain; the sequence is IVNGVETEIN…FMEFIHNATI (236 aa). A disulfide bond links Cys60 and Cys76. His75 acts as the Charge relay system in catalysis. 2 N-linked (GlcNAc...) asparagine glycosylation sites follow: Asn84 and Asn104. The active-site Charge relay system is Asp126. Asn155 and Asn158 each carry an N-linked (GlcNAc...) asparagine glycan. 2 disulfides stabilise this stretch: Cys192-Cys207 and Cys216-Cys246. The N-linked (GlcNAc...) asparagine glycan is linked to Asn218. Ser220 serves as the catalytic Charge relay system. Asn266 carries N-linked (GlcNAc...) asparagine glycosylation.

The protein belongs to the peptidase S1 family. In terms of tissue distribution, expressed by the venom duct.

The protein localises to the secreted. The chain is Venom serine protease from Polistes dominula (European paper wasp).